A 109-amino-acid chain; its full sequence is Protein GOLVEN 5 (109 aa).

A signal peptide spans 1-24 (MTNITSSFLCLLILLLFCLSFGYS). Residues 25–96 (LHGDKDEVLS…EEDDLVAYTA (72 aa)) constitute a propeptide that is removed on maturation. Residues 54 to 88 (KKAQVRGRSGQEFSKETTKMMMKKTTKKETNVEEE) form a disordered region. Residue Tyr98 is modified to Sulfotyrosine. Residue Pro106 is modified to Hydroxyproline.

This sequence belongs to the RGF family. Binds to LRR receptor-like serine/threonine-protein kinases RGI1, RGI2 and RGI3 to trigger their dimerization with SERK proteins and subsequent signaling. In terms of tissue distribution, expressed in root tips.

The protein localises to the secreted. Its function is as follows. Signaling peptide (root growth factor) that maintains the postembryonic root stem cell niche in a PIN2-traffic dependent manner. Root growth factor that regulates the pattern of root growth and lateral root development by modulating the length and the number of cortical cells in the root apical meristem (RAM), and the anticlinal asymmetric cell divisions in lateral root initiation cells. Influences the longitudinal growth rate in the primary root in response to phosphate ion (Pi)-deprivation. The polypeptide is Protein GOLVEN 5 (Arabidopsis thaliana (Mouse-ear cress)).